The sequence spans 153 residues: Ribosomal RNA large subunit methyltransferase H (153 aa).

S-adenosyl-L-methionine is bound by residues Leu-70, Gly-102, and 121–126; that span reads LSAMTF.

The protein belongs to the RNA methyltransferase RlmH family. In terms of assembly, homodimer.

Its subcellular location is the cytoplasm. The enzyme catalyses pseudouridine(1915) in 23S rRNA + S-adenosyl-L-methionine = N(3)-methylpseudouridine(1915) in 23S rRNA + S-adenosyl-L-homocysteine + H(+). Functionally, specifically methylates the pseudouridine at position 1915 (m3Psi1915) in 23S rRNA. The protein is Ribosomal RNA large subunit methyltransferase H of Trichlorobacter lovleyi (strain ATCC BAA-1151 / DSM 17278 / SZ) (Geobacter lovleyi).